The chain runs to 667 residues: Smc-like protein Sph2 (667 aa).

Coiled coils occupy residues 153–295 (GSIQ…SLAT) and 355–517 (GRLD…AITA).

The protein belongs to the Sph1/Sph2 family.

It localises to the cytoplasm. Functionally, may play a role in replication. The polypeptide is Smc-like protein Sph2 (sph2) (Halobacterium salinarum (strain ATCC 29341 / DSM 671 / R1)).